A 334-amino-acid polypeptide reads, in one-letter code: Probable fructose-bisphosphate aldolase class 1 (334 aa).

This sequence belongs to the class I fructose-bisphosphate aldolase family.

The catalysed reaction is beta-D-fructose 1,6-bisphosphate = D-glyceraldehyde 3-phosphate + dihydroxyacetone phosphate. It functions in the pathway carbohydrate degradation; glycolysis; D-glyceraldehyde 3-phosphate and glycerone phosphate from D-glucose: step 4/4. This is Probable fructose-bisphosphate aldolase class 1 from Xylella fastidiosa (strain 9a5c).